A 502-amino-acid chain; its full sequence is T-complex protein 11-like X-linked protein 2 (502 aa).

The segment at 1–36 is disordered; sequence MPKTEETVLQNDPSVAENGAPEPKTPGQSQKSKSFC.

It belongs to the TCP11 family.

This chain is T-complex protein 11-like X-linked protein 2, found in Homo sapiens (Human).